A 654-amino-acid polypeptide reads, in one-letter code: NADPH-dependent diflavin oxidoreductase 1 (654 aa).

The span at 1–10 (MSGSQSSGSP) shows a compositional bias: low complexity. The tract at residues 1 to 22 (MSGSQSSGSPGSPGPPGPPGRS) is disordered. The Flavodoxin-like domain occupies 23–167 (ALVVYGSETG…TFIPWLAGFR (145 aa)). Residues 29 to 34 (SETGNA), 76 to 79 (STTG), and 114 to 123 (LGDSSYPKFN) contribute to the FMN site. The 251-residue stretch at 235 to 485 (HDSLTATLVQ…QLQRGGLNSS (251 aa)) folds into the FAD-binding FR-type domain. Residues R389, 419–422 (RQFS), and 458–461 (GVCT) each bind FAD. Residues T500, 568–569 (SR), and 574–578 (KVYVQ) contribute to the NADP(+) site. W654 is a binding site for FAD.

It belongs to the NADPH-dependent diflavin oxidoreductase NDOR1 family. In the N-terminal section; belongs to the flavodoxin family. The protein in the C-terminal section; belongs to the flavoprotein pyridine nucleotide cytochrome reductase family. In terms of assembly, interacts with dre2; as part of the cytosolic iron-sulfur (Fe-S) protein assembly (CIA) machinery. FAD serves as cofactor. It depends on FMN as a cofactor.

It is found in the cytoplasm. It localises to the mitochondrion. The catalysed reaction is 2 oxidized [2Fe-2S]-[protein] + NADPH = 2 reduced [2Fe-2S]-[protein] + NADP(+) + H(+). Its function is as follows. NADPH-dependent reductase which is a central component of the cytosolic iron-sulfur (Fe-S) protein assembly (CIA) machinery. Transfers electrons from NADPH via its FAD and FMN prosthetic groups to the [2Fe-2S] cluster of dre2, another key component of the CIA machinery. In turn, this reduced cluster provides electrons for assembly of cytosolic iron-sulfur cluster proteins. Positively controls H(2)O(2)-induced cell death. In Emericella nidulans (strain FGSC A4 / ATCC 38163 / CBS 112.46 / NRRL 194 / M139) (Aspergillus nidulans), this protein is NADPH-dependent diflavin oxidoreductase 1.